A 334-amino-acid polypeptide reads, in one-letter code: Anthranilate phosphoribosyltransferase (334 aa).

Residues G79, 82 to 83, S87, 89 to 92, 107 to 115, and S119 each bind 5-phospho-alpha-D-ribose 1-diphosphate; these read GD, NIST, and KHGNRSISS. G79 serves as a coordination point for anthranilate. Position 91 (S91) interacts with Mg(2+). N110 lines the anthranilate pocket. Residue R165 participates in anthranilate binding. Mg(2+) is bound by residues D224 and E225.

This sequence belongs to the anthranilate phosphoribosyltransferase family. Homodimer. Requires Mg(2+) as cofactor.

It catalyses the reaction N-(5-phospho-beta-D-ribosyl)anthranilate + diphosphate = 5-phospho-alpha-D-ribose 1-diphosphate + anthranilate. Its pathway is amino-acid biosynthesis; L-tryptophan biosynthesis; L-tryptophan from chorismate: step 2/5. Functionally, catalyzes the transfer of the phosphoribosyl group of 5-phosphorylribose-1-pyrophosphate (PRPP) to anthranilate to yield N-(5'-phosphoribosyl)-anthranilate (PRA). This is Anthranilate phosphoribosyltransferase from Streptococcus gordonii (strain Challis / ATCC 35105 / BCRC 15272 / CH1 / DL1 / V288).